The following is a 2109-amino-acid chain: Nonribosomal peptide synthetase sidE (2109 aa).

An adenylation 1 region spans residues L31–I512. Residues A537–S613 enclose the Carrier 1 domain. At S574 the chain carries O-(pantetheine 4'-phosphoryl)serine. The condensation 1 stretch occupies residues D646–I908. Positions R1058–A1555 are adenylation 2. In terms of domain architecture, Carrier 2 spans P1584–S1660. S1621 carries the post-translational modification O-(pantetheine 4'-phosphoryl)serine. The interval Y1695–D1968 is condensation 2.

Belongs to the NRP synthetase family.

It functions in the pathway siderophore biosynthesis. Functionally, nonribosomal peptide synthetase; part of the siderophore biosynthetic pathway. Aspergillus fumigatus produces four types of siderophores, low-molecular-mass iron chelators, including excreted fusarinine C (FsC) and triacetylfusarinine C (TAFC) for iron uptake and intacellular ferricrocin (FC) for hyphal and hydroxyferricrocin (HFC) for conidial iron distribution and storage. TAFC consists of three N(2)-acetyl-N(5)-anhydromevalonyl-N(5)-hydroxyornithine residues cyclically linked by ester bonds; FC is a cyclic hexapeptide with the structure Gly-Ser-Gly-(N(5)-acetyl-N(5)-hydroxyornithine)x3. The biosynthesis of all four siderophores depends on the hydroxylation of ornithine, catalyzed by the monooxygenase sidA. Subsequently, the pathways for biosynthesis of extra- and intracellular siderophores split. For biosynthesis of extracellular siderophores, the transacylase sidF transfers anhydromevalonyl to N(5)-hydroxyornithine. The required anhydromevalonyl-CoA moiety is derived from mevalonate by CoA ligation and dehydration catalyzed by sidI and sidH respectively. The acetylation of N(5)-hydroxyornithine for FC biosynthesis involves the constitutively expressed sidL. FC is hydroxylated to HFC by an as yet uncharacterized enzyme during conidiation. Assembly of fusarinine C (FsC) and FC is catalyzed by two different nonribosomal peptide synthetases (NRPS), sidD and sidC respectively. Subsequently, sidG catalyzes N2-acetylation of FsC for forming TAFC. Both extra- and intracellular siderophores are crucial for growth during iron limitation and virulence. This is Nonribosomal peptide synthetase sidE from Aspergillus fumigatus (strain ATCC MYA-4609 / CBS 101355 / FGSC A1100 / Af293) (Neosartorya fumigata).